Consider the following 201-residue polypeptide: Recombination protein RecR (201 aa).

Residues 57–72 (CKYCRTFTEQEQCTIC) form a C4-type zinc finger. Positions 81-176 (GQICVVESPA…TASRIAHGVP (96 aa)) constitute a Toprim domain.

The protein belongs to the RecR family.

May play a role in DNA repair. It seems to be involved in an RecBC-independent recombinational process of DNA repair. It may act with RecF and RecO. This is Recombination protein RecR from Photorhabdus laumondii subsp. laumondii (strain DSM 15139 / CIP 105565 / TT01) (Photorhabdus luminescens subsp. laumondii).